The chain runs to 233 residues: Sugar fermentation stimulation protein homolog (233 aa).

It belongs to the SfsA family.

This Rhodospirillum centenum (strain ATCC 51521 / SW) protein is Sugar fermentation stimulation protein homolog.